A 260-amino-acid polypeptide reads, in one-letter code: Small ribosomal subunit protein eS1 (260 aa).

Residue Lys-30 is modified to N6-acetyllysine; alternate. Residue Lys-30 forms a Glycyl lysine isopeptide (Lys-Gly) (interchain with G-Cter in SUMO2); alternate linkage. The residue at position 52 (Lys-52) is an N6-acetyllysine. Tyr-151 is modified (ADP-ribosyltyrosine). Residues 228–260 (HGEGSSSGKATGDETGAKVERADGYEPPVQESV) are disordered. Phosphoserine occurs at positions 232 and 233. Residues 238 to 251 (TGDETGAKVERADG) show a composition bias toward basic and acidic residues. Lys-245 is subject to N6-acetyllysine; alternate. A Glycyl lysine isopeptide (Lys-Gly) (interchain with G-Cter in SUMO2); alternate cross-link involves residue Lys-245. Tyr-252 bears the Phosphotyrosine mark. At Ser-259 the chain carries Phosphoserine.

This sequence belongs to the eukaryotic ribosomal protein eS1 family. As to quaternary structure, component of the small ribosomal subunit. Mature ribosomes consist of a small (40S) and a large (60S) subunit. The 40S subunit contains about 33 different proteins and 1 molecule of RNA (18S). The 60S subunit contains about 49 different proteins and 3 molecules of RNA (28S, 5.8S and 5S). Identified in a IGF2BP1-dependent mRNP granule complex containing untranslated mRNAs. Binds with high affinity to IPO4. Interacts with DDIT3. Part of the small subunit (SSU) processome, composed of more than 70 proteins and the RNA chaperone small nucleolar RNA (snoRNA) U3. In terms of processing, ADP-ribosylated at Tyr-151 by PARP1 in presence of HPF1.

It is found in the cytoplasm. Its subcellular location is the nucleus. It localises to the nucleolus. Functionally, component of the small ribosomal subunit. The ribosome is a large ribonucleoprotein complex responsible for the synthesis of proteins in the cell. Part of the small subunit (SSU) processome, first precursor of the small eukaryotic ribosomal subunit. During the assembly of the SSU processome in the nucleolus, many ribosome biogenesis factors, an RNA chaperone and ribosomal proteins associate with the nascent pre-rRNA and work in concert to generate RNA folding, modifications, rearrangements and cleavage as well as targeted degradation of pre-ribosomal RNA by the RNA exosome. May play a role during erythropoiesis through regulation of transcription factor DDIT3. The polypeptide is Small ribosomal subunit protein eS1 (Felis catus (Cat)).